Consider the following 527-residue polypeptide: Putative WEB family protein At4g17210 (527 aa).

Disordered stretches follow at residues 1–28 (MAKI…IDTR) and 46–70 (FSKK…TDVS). Residues 55 to 68 (SSSSSSQSQDTTTD) show a composition bias toward low complexity. Coiled-coil stretches lie at residues 95-159 (AAKA…YILI), 202-389 (SNKI…AKHM), and 436-513 (KKIR…EAHS).

The protein belongs to the WEB family.

The polypeptide is Putative WEB family protein At4g17210 (Arabidopsis thaliana (Mouse-ear cress)).